The sequence spans 224 residues: Ribonuclease 3 (224 aa).

The RNase III domain maps to 5–127 (LERLCRRLNY…ILAAIYLDGG (123 aa)). Glu40 serves as a coordination point for Mg(2+). Residue Asp44 is part of the active site. Residues Asp113 and Glu116 each coordinate Mg(2+). Glu116 is an active-site residue. Positions 154–224 (DAKTQLQEFL…AKAMLEQLQG (71 aa)) constitute a DRBM domain.

Belongs to the ribonuclease III family. Homodimer. Requires Mg(2+) as cofactor.

It localises to the cytoplasm. It catalyses the reaction Endonucleolytic cleavage to 5'-phosphomonoester.. In terms of biological role, digests double-stranded RNA. Involved in the processing of primary rRNA transcript to yield the immediate precursors to the large and small rRNAs (23S and 16S). Processes some mRNAs, and tRNAs when they are encoded in the rRNA operon. Processes pre-crRNA and tracrRNA of type II CRISPR loci if present in the organism. This chain is Ribonuclease 3, found in Legionella pneumophila subsp. pneumophila (strain Philadelphia 1 / ATCC 33152 / DSM 7513).